The sequence spans 139 residues: Small ribosomal subunit protein uS19 (139 aa).

The protein belongs to the universal ribosomal protein uS19 family.

In terms of biological role, protein S19 forms a complex with S13 that binds strongly to the 16S ribosomal RNA. This chain is Small ribosomal subunit protein uS19, found in Methanoregula boonei (strain DSM 21154 / JCM 14090 / 6A8).